A 27-amino-acid polypeptide reads, in one-letter code: uncharacterized protein (27 aa).

This is an uncharacterized protein from Saccharomyces cerevisiae (strain ATCC 204508 / S288c) (Baker's yeast).